Here is a 361-residue protein sequence, read N- to C-terminus: MVEAQSWTTRRMSNPRFDAAATAAPTIVDIPGTPPHSSASSPLKPFFLSSPTVSPTILTAAIIAAWFGSNIGVLLLNKYLLFYYGFRYPIFLTMTHMLSCAAYSSAVINIAGIVPRQHILSRRQFLKILSLSAIFCLSVVCGNTSLRYIPVSFNQAIGATTPFFTAVFSFLITCKTESTEVYLALLPVVSGIVLASNSEPSFHLFGFLICVASTAGRALKSVVQGIILTSESEKLHSMNLLLYMAPMAACILLPFTLYIEGNVLRVLIEKARTDPLIIFLLAGNATVAYLVNLTNFLVTKHTSALTLQVLGNGKAAVAAGVSVLIFRNPVTVMGIAGFGVTIMGVVLYSEARKRSKLLNQK.

Residue V2 is modified to N-acetylvaline. The next 9 helical transmembrane spans lie at 56 to 76 (TILT…VLLL), 90 to 110 (IFLT…VINI), 125 to 145 (FLKI…GNTS), 153 to 173 (FNQA…FLIT), 192 to 212 (IVLA…ICVA), 240 to 260 (LLLY…LYIE), 276 to 296 (LIIF…LTNF), 306 to 326 (TLQV…VLIF), and 329 to 349 (PVTV…VLYS). Positions 89 to 196 (PIFLTMTHML…PVVSGIVLAS (108 aa)) constitute an EamA domain.

It belongs to the TPT transporter family. TPT (TC 2.A.7.9) subfamily.

It localises to the membrane. The sequence is that of Probable sugar phosphate/phosphate translocator At1g12500 from Arabidopsis thaliana (Mouse-ear cress).